The chain runs to 392 residues: Autophagy-related protein 21 (392 aa).

2 WD repeats span residues V200–P240 and S250–D289. The L/FRRG motif motif lies at F246–S250.

It belongs to the WD repeat PROPPIN family.

The protein resides in the cytoplasm. Its subcellular location is the membrane. It localises to the vacuole membrane. In terms of biological role, required for cytoplasm to vacuole transport (Cvt) vesicles formation and mitophagy. Involved in binding of phosphatidylethanolamine to ATG8 and in recruitment of ATG8 and ATG5 to the pre-autophagosomal structure. Protects ATG8 from ARG4-mediated cleavage. The polypeptide is Autophagy-related protein 21 (ATG21) (Kluyveromyces lactis (strain ATCC 8585 / CBS 2359 / DSM 70799 / NBRC 1267 / NRRL Y-1140 / WM37) (Yeast)).